A 153-amino-acid polypeptide reads, in one-letter code: Protein-export protein SecB (153 aa).

This sequence belongs to the SecB family. In terms of assembly, homotetramer, a dimer of dimers. One homotetramer interacts with 1 SecA dimer.

Its subcellular location is the cytoplasm. Its function is as follows. One of the proteins required for the normal export of preproteins out of the cell cytoplasm. It is a molecular chaperone that binds to a subset of precursor proteins, maintaining them in a translocation-competent state. It also specifically binds to its receptor SecA. The sequence is that of Protein-export protein SecB from Edwardsiella ictaluri (strain 93-146).